A 518-amino-acid polypeptide reads, in one-letter code: 3-octaprenyl-4-hydroxybenzoate carboxy-lyase (518 aa).

A Mn(2+)-binding site is contributed by N177. Prenylated FMN-binding positions include 180–182, 194–196, and 199–200; these read IYR, RWL, and RG. Position 243 (E243) interacts with Mn(2+). D318 (proton donor) is an active-site residue.

This sequence belongs to the UbiD family. As to quaternary structure, homohexamer. It depends on prenylated FMN as a cofactor. The cofactor is Mn(2+).

The protein localises to the cell membrane. The catalysed reaction is a 4-hydroxy-3-(all-trans-polyprenyl)benzoate + H(+) = a 2-(all-trans-polyprenyl)phenol + CO2. Its pathway is cofactor biosynthesis; ubiquinone biosynthesis. In terms of biological role, catalyzes the decarboxylation of 3-octaprenyl-4-hydroxy benzoate to 2-octaprenylphenol, an intermediate step in ubiquinone biosynthesis. The protein is 3-octaprenyl-4-hydroxybenzoate carboxy-lyase of Burkholderia lata (strain ATCC 17760 / DSM 23089 / LMG 22485 / NCIMB 9086 / R18194 / 383).